A 104-amino-acid polypeptide reads, in one-letter code: L-rhamnose mutarotase (104 aa).

Tyr-18 is a binding site for substrate. The active-site Proton donor is the His-22. Substrate contacts are provided by residues Tyr-41 and 76 to 77 (WW).

Belongs to the rhamnose mutarotase family. As to quaternary structure, homodimer.

It localises to the cytoplasm. The enzyme catalyses alpha-L-rhamnose = beta-L-rhamnose. It participates in carbohydrate metabolism; L-rhamnose metabolism. Its function is as follows. Involved in the anomeric conversion of L-rhamnose. This is L-rhamnose mutarotase from Escherichia coli (strain K12 / MC4100 / BW2952).